The following is a 126-amino-acid chain: uncharacterized protein (126 aa).

This is an uncharacterized protein from Columba livia (Rock dove).